Consider the following 143-residue polypeptide: Transcriptional regulator MraZ (143 aa).

SpoVT-AbrB domains follow at residues 5 to 47 (TYTP…PRSE) and 76 to 119 (TDEQ…DAQA).

It belongs to the MraZ family. Forms oligomers.

The protein resides in the cytoplasm. It is found in the nucleoid. In Mycobacterium ulcerans (strain Agy99), this protein is Transcriptional regulator MraZ.